The primary structure comprises 258 residues: MKITKLEKKKRLYLMELDNGDKCYITEDTIVRFMLSRDKVISEEELKEIQDFAQFSYGKNLALYHLSFKARTEKEVREYLKKYDIDENIVSQVIANLKEDKWINDGQYAYAIINTNQLSGDKGPYVLTQKLAQKGISKSTIEENLKEFDFSEVAQRVANKLLKKYEGKLPARALQDKIIQNLTNKGFSYSDAKIAFDELDSQVDEETTQELIFKELDKQYTKYARKYEGYELKQRLTQVLARKGYDFSDIASALREYL.

It belongs to the RecX family.

It is found in the cytoplasm. In terms of biological role, modulates RecA activity. The chain is Regulatory protein RecX from Streptococcus pneumoniae (strain Hungary19A-6).